The chain runs to 518 residues: Light-independent protochlorophyllide reductase subunit B (518 aa).

Residue aspartate 36 participates in [4Fe-4S] cluster binding. Aspartate 299 acts as the Proton donor in catalysis. A substrate-binding site is contributed by 434–435 (GM).

Belongs to the ChlB/BchB/BchZ family. Protochlorophyllide reductase is composed of three subunits; ChlL, ChlN and ChlB. Forms a heterotetramer of two ChlB and two ChlN subunits. Requires [4Fe-4S] cluster as cofactor.

It is found in the plastid. It localises to the chloroplast. The catalysed reaction is chlorophyllide a + oxidized 2[4Fe-4S]-[ferredoxin] + 2 ADP + 2 phosphate = protochlorophyllide a + reduced 2[4Fe-4S]-[ferredoxin] + 2 ATP + 2 H2O. It participates in porphyrin-containing compound metabolism; chlorophyll biosynthesis (light-independent). Its function is as follows. Component of the dark-operative protochlorophyllide reductase (DPOR) that uses Mg-ATP and reduced ferredoxin to reduce ring D of protochlorophyllide (Pchlide) to form chlorophyllide a (Chlide). This reaction is light-independent. The NB-protein (ChlN-ChlB) is the catalytic component of the complex. This Adiantum capillus-veneris (Maidenhair fern) protein is Light-independent protochlorophyllide reductase subunit B.